Reading from the N-terminus, the 125-residue chain is Cysteine proteinase inhibitor 3 (125 aa).

A signal peptide spans 1–22; it reads MESKTFWIVTLLLCGTIQLAIC. The 89-residue stretch at 36 to 124 folds into the Cystatin domain; the sequence is GGVHDLRGNQ…KQLQEFKESS (89 aa). The Secondary area of contact signature appears at 80–84; it reads QVVAG.

Belongs to the cystatin family. Phytocystatin subfamily.

Its subcellular location is the secreted. Functionally, specific inhibitor of cysteine proteinases. Probably involved in the regulation of endogenous processes and in defense against pests and pathogens. The sequence is that of Cysteine proteinase inhibitor 3 (CYS3) from Arabidopsis thaliana (Mouse-ear cress).